A 427-amino-acid polypeptide reads, in one-letter code: Serine--tRNA ligase (427 aa).

An L-serine-binding site is contributed by 236–238; sequence TAE. 267–269 lines the ATP pocket; sequence RSE. Glutamate 290 contacts L-serine. 354-357 contributes to the ATP binding site; the sequence is EISS. Serine 388 contributes to the L-serine binding site.

This sequence belongs to the class-II aminoacyl-tRNA synthetase family. Type-1 seryl-tRNA synthetase subfamily. In terms of assembly, homodimer. The tRNA molecule binds across the dimer.

It localises to the cytoplasm. The catalysed reaction is tRNA(Ser) + L-serine + ATP = L-seryl-tRNA(Ser) + AMP + diphosphate + H(+). The enzyme catalyses tRNA(Sec) + L-serine + ATP = L-seryl-tRNA(Sec) + AMP + diphosphate + H(+). The protein operates within aminoacyl-tRNA biosynthesis; selenocysteinyl-tRNA(Sec) biosynthesis; L-seryl-tRNA(Sec) from L-serine and tRNA(Sec): step 1/1. Catalyzes the attachment of serine to tRNA(Ser). Is also able to aminoacylate tRNA(Sec) with serine, to form the misacylated tRNA L-seryl-tRNA(Sec), which will be further converted into selenocysteinyl-tRNA(Sec). This is Serine--tRNA ligase from Psychrobacter arcticus (strain DSM 17307 / VKM B-2377 / 273-4).